We begin with the raw amino-acid sequence, 812 residues long: Valine--tRNA ligase (812 aa).

A 'HIGH' region motif is present at residues 47–57 (PTISGQLHIGH). The 'KMSKS' region motif lies at 536 to 540 (KMSKS). Position 539 (Lys539) interacts with ATP.

It belongs to the class-I aminoacyl-tRNA synthetase family. ValS type 2 subfamily. Monomer.

The protein localises to the cytoplasm. The catalysed reaction is tRNA(Val) + L-valine + ATP = L-valyl-tRNA(Val) + AMP + diphosphate. In terms of biological role, catalyzes the attachment of valine to tRNA(Val). As ValRS can inadvertently accommodate and process structurally similar amino acids such as threonine, to avoid such errors, it has a 'posttransfer' editing activity that hydrolyzes mischarged Thr-tRNA(Val) in a tRNA-dependent manner. The protein is Valine--tRNA ligase of Ehrlichia ruminantium (strain Gardel).